Reading from the N-terminus, the 252-residue chain is Adenosylcobinamide-GDP ribazoletransferase (252 aa).

7 consecutive transmembrane segments (helical) span residues 34–54, 55–75, 113–133, 138–158, 174–194, 198–218, and 230–250; these read GASFMPLVGVIVGGIQWIIYK, LCIIIFSLNVSIVIVILAGIV, YACLAIIIDILLKYSFFCSIV, LIIIIAPVMSRFSIVFIAFIG, IGKWQLFWAAFITVITLFFLM, FIYVIILIFAGLFMSFLFNVF, and LLGANNEIVEILTMVMLCVII.

Belongs to the CobS family. Mg(2+) is required as a cofactor.

The protein resides in the cell membrane. It catalyses the reaction alpha-ribazole + adenosylcob(III)inamide-GDP = adenosylcob(III)alamin + GMP + H(+). The enzyme catalyses alpha-ribazole 5'-phosphate + adenosylcob(III)inamide-GDP = adenosylcob(III)alamin 5'-phosphate + GMP + H(+). It functions in the pathway cofactor biosynthesis; adenosylcobalamin biosynthesis; adenosylcobalamin from cob(II)yrinate a,c-diamide: step 7/7. In terms of biological role, joins adenosylcobinamide-GDP and alpha-ribazole to generate adenosylcobalamin (Ado-cobalamin). Also synthesizes adenosylcobalamin 5'-phosphate from adenosylcobinamide-GDP and alpha-ribazole 5'-phosphate. The sequence is that of Adenosylcobinamide-GDP ribazoletransferase from Clostridium kluyveri (strain NBRC 12016).